Reading from the N-terminus, the 463-residue chain is Bifunctional protein HldE (463 aa).

The tract at residues 1–311 is ribokinase; sequence MKKILVVGDL…EEIALILNQT (311 aa). 191 to 194 serves as a coordination point for ATP; that stretch reads NRFE. Aspartate 260 is an active-site residue. The segment at 334-463 is cytidylyltransferase; sequence FTNGCFDLLH…IEKIKRTCND (130 aa).

The protein in the N-terminal section; belongs to the carbohydrate kinase PfkB family. This sequence in the C-terminal section; belongs to the cytidylyltransferase family. As to quaternary structure, homodimer.

The enzyme catalyses D-glycero-beta-D-manno-heptose 7-phosphate + ATP = D-glycero-beta-D-manno-heptose 1,7-bisphosphate + ADP + H(+). The catalysed reaction is D-glycero-beta-D-manno-heptose 1-phosphate + ATP + H(+) = ADP-D-glycero-beta-D-manno-heptose + diphosphate. Its pathway is nucleotide-sugar biosynthesis; ADP-L-glycero-beta-D-manno-heptose biosynthesis; ADP-L-glycero-beta-D-manno-heptose from D-glycero-beta-D-manno-heptose 7-phosphate: step 1/4. It participates in nucleotide-sugar biosynthesis; ADP-L-glycero-beta-D-manno-heptose biosynthesis; ADP-L-glycero-beta-D-manno-heptose from D-glycero-beta-D-manno-heptose 7-phosphate: step 3/4. In terms of biological role, catalyzes the phosphorylation of D-glycero-D-manno-heptose 7-phosphate at the C-1 position to selectively form D-glycero-beta-D-manno-heptose-1,7-bisphosphate. Functionally, catalyzes the ADP transfer from ATP to D-glycero-beta-D-manno-heptose 1-phosphate, yielding ADP-D-glycero-beta-D-manno-heptose. The protein is Bifunctional protein HldE of Helicobacter pylori (strain G27).